Consider the following 80-residue polypeptide: Bacteriochlorophyll c-binding protein (80 aa).

His25 is an a bacteriochlorophyll c binding site. Positions 49–80 (PGVSRSGSGEGAFSSSPSNGFRPKRIRSRFNR) are disordered. The propeptide occupies 54-80 (SGSGEGAFSSSPSNGFRPKRIRSRFNR). Residues 70–80 (RPKRIRSRFNR) show a composition bias toward basic residues.

The protein belongs to the BChl C/E-binding protein family.

The protein resides in the chlorosome. The protein localises to the chlorosome envelope. Component of the photosynthetic apparatus. The light harvesting B740 complex binds bacteriochlorophyll c. This is Bacteriochlorophyll c-binding protein (cmsA) from Chloroflexus aurantiacus (strain ATCC 29366 / DSM 635 / J-10-fl).